We begin with the raw amino-acid sequence, 210 residues long: Chaperone protein TorD (210 aa).

This sequence belongs to the TorD/DmsD family. TorD subfamily.

Its subcellular location is the cytoplasm. Its function is as follows. Involved in the biogenesis of TorA. Acts on TorA before the insertion of the molybdenum cofactor and, as a result, probably favors a conformation of the apoenzyme that is competent for acquiring the cofactor. The sequence is that of Chaperone protein TorD from Salmonella arizonae (strain ATCC BAA-731 / CDC346-86 / RSK2980).